The following is a 256-amino-acid chain: Thiazole synthase (256 aa).

Residue lysine 95 is the Schiff-base intermediate with DXP of the active site. Residues glycine 156, 182–183, and 204–205 contribute to the 1-deoxy-D-xylulose 5-phosphate site; these read AG and NT.

The protein belongs to the ThiG family. As to quaternary structure, homotetramer. Forms heterodimers with either ThiH or ThiS.

The protein resides in the cytoplasm. The catalysed reaction is [ThiS sulfur-carrier protein]-C-terminal-Gly-aminoethanethioate + 2-iminoacetate + 1-deoxy-D-xylulose 5-phosphate = [ThiS sulfur-carrier protein]-C-terminal Gly-Gly + 2-[(2R,5Z)-2-carboxy-4-methylthiazol-5(2H)-ylidene]ethyl phosphate + 2 H2O + H(+). The protein operates within cofactor biosynthesis; thiamine diphosphate biosynthesis. Its function is as follows. Catalyzes the rearrangement of 1-deoxy-D-xylulose 5-phosphate (DXP) to produce the thiazole phosphate moiety of thiamine. Sulfur is provided by the thiocarboxylate moiety of the carrier protein ThiS. In vitro, sulfur can be provided by H(2)S. This chain is Thiazole synthase, found in Salmonella choleraesuis (strain SC-B67).